We begin with the raw amino-acid sequence, 263 residues long: Leukocyte-associated immunoglobulin-like receptor 1 (263 aa).

The first 21 residues, 1–21, serve as a signal peptide directing secretion; the sequence is MSLHPVILLVLVLCLGWKINT. The Extracellular portion of the chain corresponds to 22–144; the sequence is QEGSLPDITI…TSWLKTYSIY (123 aa). The region spanning 27-115 is the Ig-like C2-type domain; that stretch reads PDITIFPNSS…TWSERSKTLE (89 aa). N-linked (GlcNAc...) asparagine glycosylation is found at Asn-34 and Asn-90. Cysteines 49 and 99 form a disulfide. A helical membrane pass occupies residues 145–165; the sequence is IFTVVSVIFLLCLSALLFCFL. Residues 166–263 are Cytoplasmic-facing; that stretch reads RHRQKKQGLP…SSTYAAIIRH (98 aa). 2 short sequence motifs (ITIM motif) span residues 226 to 231 and 255 to 260; these read VTYIQL and STYAAI. Residues Tyr-228 and Tyr-257 each carry the phosphotyrosine modification.

Interacts with SH2 domains of tyrosine-protein phosphatases PTPN6 and PTPN11. The interaction with PTPN6 is constitutive. Interacts with the SH2 domain of CSK. Binds with high affinity to extracellular matrix collagens, the interaction is functionally important. Phosphorylation at Tyr-228 and Tyr-257 activates it. May be phosphorylated by LCK. Post-translationally, N-glycosylated. Expressed in lymphoid organs and in cell lines of hemopoietic origin.

It localises to the cell membrane. In terms of biological role, functions as an inhibitory receptor that plays a constitutive negative regulatory role on cytolytic function of natural killer (NK) cells, B-cells and T-cells. Activation by Tyr phosphorylation results in recruitment and activation of the phosphatases PTPN6 and PTPN11. It also reduces the increase of intracellular calcium evoked by B-cell receptor ligation. May also play its inhibitory role independently of SH2-containing phosphatases. Modulates cytokine production in CD4+ T-cells, down-regulating IL2 and IFNG production while inducing secretion of transforming growth factor beta. Also down-regulates IgG and IgE production in B-cells as well as IL8, IL10 and TNF secretion. Inhibits proliferation and induces apoptosis in myeloid leukemia cell lines as well as prevents nuclear translocation of NF-kappa-B p65 subunit/RELA and phosphorylation of I-kappa-B alpha/CHUK in these cells. Inhibits the differentiation of peripheral blood precursors towards dendritic cells. This is Leukocyte-associated immunoglobulin-like receptor 1 (Lair1) from Mus musculus (Mouse).